A 324-amino-acid polypeptide reads, in one-letter code: Appendage-associated protein (324 aa).

The first 32 residues, 1–32 (MGCPVSRGGSPGCGRRIAEELRLAEDARLRLA), serve as a signal peptide directing secretion. The stretch at 195–255 (IAQAKEIAQA…AADKLQALGK (61 aa)) forms a coiled coil.

Its subcellular location is the secreted. Its function is as follows. Associates with actin filament appendages that are formed in the inclusion appendages of the parasitophorous vacuole during infection of the host erythrocyte. The polypeptide is Appendage-associated protein (aaaP1) (Anaplasma marginale (strain Florida)).